Reading from the N-terminus, the 130-residue chain is Small ribosomal subunit protein uS9 (130 aa).

The protein belongs to the universal ribosomal protein uS9 family.

The polypeptide is Small ribosomal subunit protein uS9 (Burkholderia multivorans (strain ATCC 17616 / 249)).